Reading from the N-terminus, the 386-residue chain is NADH-ubiquinone oxidoreductase chain 4 (386 aa).

The next 11 membrane-spanning stretches (helical) occupy residues 8-28 (SEFH…YFLF), 37-57 (WPLS…LTFT), 61-81 (FILF…LILG), 91-111 (ASYY…FIII), 133-153 (IFLL…AHIW), 167-187 (MVLA…VQVL), 189-209 (IYSE…SCLI), 219-239 (LIAY…LMSC), 247-267 (ILMM…SYLF), 283-303 (ISLF…NMGL), and 315-335 (FFIG…ILCF).

It belongs to the complex I subunit 4 family.

It localises to the mitochondrion membrane. It carries out the reaction a ubiquinone + NADH + 5 H(+)(in) = a ubiquinol + NAD(+) + 4 H(+)(out). Its function is as follows. Core subunit of the mitochondrial membrane respiratory chain NADH dehydrogenase (Complex I) that is believed to belong to the minimal assembly required for catalysis. Complex I functions in the transfer of electrons from NADH to the respiratory chain. The immediate electron acceptor for the enzyme is believed to be ubiquinone. In Artemia franciscana (Brine shrimp), this protein is NADH-ubiquinone oxidoreductase chain 4 (ND4).